Here is a 51-residue protein sequence, read N- to C-terminus: Small ribosomal subunit protein uS13 (51 aa).

The protein belongs to the universal ribosomal protein uS13 family. In terms of assembly, part of the 30S ribosomal subunit. Forms a loose heterodimer with protein S19. Forms two bridges to the 50S subunit in the 70S ribosome.

In terms of biological role, located at the top of the head of the 30S subunit, it contacts several helices of the 16S rRNA. In the 70S ribosome it contacts the 23S rRNA (bridge B1a) and protein L5 of the 50S subunit (bridge B1b), connecting the 2 subunits; these bridges are implicated in subunit movement. Contacts the tRNAs in the A and P-sites. The polypeptide is Small ribosomal subunit protein uS13 (rpsM) (Lactococcus lactis subsp. cremoris (Streptococcus cremoris)).